The following is a 225-amino-acid chain: MTPRLRLQPESVGIGMTSQRVRDRLVERLREAGIQDESTLNAMRTVPRHLFIDEALASRAYEDTALPIGHGQTISQPWVVARMTEAVLQVAPTKVLEVGTGSGYQGAILAALGLEVYTVERIGDLLRQARKRFRHLGMNVRSKHDDGRIGWPEHGPYDAIVVTAAAPALVDALIDQLAVGGRLVAPVGGASSQSLVQLTRGADGAIEQQVLAPVTFVPLLSGMLD.

Ser-75 is a catalytic residue.

Belongs to the methyltransferase superfamily. L-isoaspartyl/D-aspartyl protein methyltransferase family.

Its subcellular location is the cytoplasm. It carries out the reaction [protein]-L-isoaspartate + S-adenosyl-L-methionine = [protein]-L-isoaspartate alpha-methyl ester + S-adenosyl-L-homocysteine. Its function is as follows. Catalyzes the methyl esterification of L-isoaspartyl residues in peptides and proteins that result from spontaneous decomposition of normal L-aspartyl and L-asparaginyl residues. It plays a role in the repair and/or degradation of damaged proteins. This chain is Protein-L-isoaspartate O-methyltransferase, found in Xanthomonas axonopodis pv. citri (strain 306).